The sequence spans 198 residues: FMN-dependent NADH:quinone oxidoreductase (198 aa).

96-99 is an FMN binding site; the sequence is MYNF.

The protein belongs to the azoreductase type 1 family. As to quaternary structure, homodimer. It depends on FMN as a cofactor.

The enzyme catalyses 2 a quinone + NADH + H(+) = 2 a 1,4-benzosemiquinone + NAD(+). It carries out the reaction N,N-dimethyl-1,4-phenylenediamine + anthranilate + 2 NAD(+) = 2-(4-dimethylaminophenyl)diazenylbenzoate + 2 NADH + 2 H(+). Quinone reductase that provides resistance to thiol-specific stress caused by electrophilic quinones. Its function is as follows. Also exhibits azoreductase activity. Catalyzes the reductive cleavage of the azo bond in aromatic azo compounds to the corresponding amines. The polypeptide is FMN-dependent NADH:quinone oxidoreductase (Burkholderia thailandensis (strain ATCC 700388 / DSM 13276 / CCUG 48851 / CIP 106301 / E264)).